Reading from the N-terminus, the 764-residue chain is Phosphoribosylformylglycinamidine synthase subunit PurL (764 aa).

The segment at 1–23 (MTQEVDTVERAAATPDHPQPYRE) is disordered. H57 is an active-site residue. Y60 and K104 together coordinate ATP. E106 provides a ligand contact to Mg(2+). Substrate-binding positions include 107 to 110 (SHNH) and R129. Catalysis depends on H108, which acts as the Proton acceptor. D130 is a binding site for Mg(2+). Q258 contributes to the substrate binding site. D286 is a Mg(2+) binding site. Residue 330–332 (ESQ) participates in substrate binding. Residues N518 and G555 each coordinate ATP. N556 serves as a coordination point for Mg(2+). Substrate is bound at residue S558.

The protein belongs to the FGAMS family. In terms of assembly, monomer. Part of the FGAM synthase complex composed of 1 PurL, 1 PurQ and 2 PurS subunits.

The protein resides in the cytoplasm. It carries out the reaction N(2)-formyl-N(1)-(5-phospho-beta-D-ribosyl)glycinamide + L-glutamine + ATP + H2O = 2-formamido-N(1)-(5-O-phospho-beta-D-ribosyl)acetamidine + L-glutamate + ADP + phosphate + H(+). It functions in the pathway purine metabolism; IMP biosynthesis via de novo pathway; 5-amino-1-(5-phospho-D-ribosyl)imidazole from N(2)-formyl-N(1)-(5-phospho-D-ribosyl)glycinamide: step 1/2. In terms of biological role, part of the phosphoribosylformylglycinamidine synthase complex involved in the purines biosynthetic pathway. Catalyzes the ATP-dependent conversion of formylglycinamide ribonucleotide (FGAR) and glutamine to yield formylglycinamidine ribonucleotide (FGAM) and glutamate. The FGAM synthase complex is composed of three subunits. PurQ produces an ammonia molecule by converting glutamine to glutamate. PurL transfers the ammonia molecule to FGAR to form FGAM in an ATP-dependent manner. PurS interacts with PurQ and PurL and is thought to assist in the transfer of the ammonia molecule from PurQ to PurL. The protein is Phosphoribosylformylglycinamidine synthase subunit PurL of Mycolicibacterium vanbaalenii (strain DSM 7251 / JCM 13017 / BCRC 16820 / KCTC 9966 / NRRL B-24157 / PYR-1) (Mycobacterium vanbaalenii).